The following is a 36-amino-acid chain: Probable non-specific lipid-transfer protein (36 aa).

This sequence belongs to the plant LTP family. Phosphorylated by Ca(2+)-dependent protein kinase.

Functionally, plant non-specific lipid-transfer proteins transfer phospholipids as well as galactolipids across membranes. May play a role in wax or cutin deposition in the cell walls of expanding epidermal cells and certain secretory tissues. In Pinus pinea (Italian stone pine), this protein is Probable non-specific lipid-transfer protein.